A 384-amino-acid polypeptide reads, in one-letter code: N-acetyldiaminopimelate deacetylase (384 aa).

Residue aspartate 74 is part of the active site. Glutamate 133 serves as the catalytic Proton acceptor.

The protein belongs to the peptidase M20A family. N-acetyldiaminopimelate deacetylase subfamily.

The enzyme catalyses N-acetyl-(2S,6S)-2,6-diaminopimelate + H2O = (2S,6S)-2,6-diaminopimelate + acetate. Its pathway is amino-acid biosynthesis; L-lysine biosynthesis via DAP pathway; LL-2,6-diaminopimelate from (S)-tetrahydrodipicolinate (acetylase route): step 3/3. Its function is as follows. Catalyzes the conversion of N-acetyl-diaminopimelate to diaminopimelate and acetate. The chain is N-acetyldiaminopimelate deacetylase from Pediococcus pentosaceus (strain ATCC 25745 / CCUG 21536 / LMG 10740 / 183-1w).